The chain runs to 525 residues: Sterol O-acyltransferase 2 (525 aa).

Disordered regions lie at residues Met1–Thr34 and Gln77–Pro97. Residues Met1–Phe119 lie on the Cytoplasmic side of the membrane. Residues Arg9 to Arg23 show a composition bias toward basic and acidic residues. Position 118 (His118) interacts with cholesterol. The helical transmembrane segment at Arg120–Asp141 threads the bilayer. The Lumenal portion of the chain corresponds to Phe142–Gln161. A helical membrane pass occupies residues Leu162–Trp187. Topologically, residues Ala188–Gly199 are cytoplasmic. A helical transmembrane segment spans residues Ala200–Val223. Residues Arg224–Ser231 lie on the Lumenal side of the membrane. Residues Arg232–Pro255 traverse the membrane as a helical segment. At Gly256 to Arg296 the chain is on the cytoplasmic side. Cys280 bears the Cysteine sulfenic acid (-SOH); alternate mark. A Glycyl cysteine thioester (Cys-Gly) (interchain with G-Cter in ubiquitin); alternate cross-link involves residue Cys280. The chain crosses the membrane as a helical span at residues Trp297–Met329. At Ser330–Ala346 the chain is on the lumenal side. A helical transmembrane segment spans residues Thr347–Met372. At Leu373–Arg420 the chain is on the cytoplasmic side. Positions Phe380–Asn386 match the FYXDWWN motif motif. Residues Asn392, Arg395, Asn398, His402, Tyr410, and Ser433 each coordinate an acyl-CoA. Residues Ala421–Leu445 form a helical membrane-spanning segment. His437 is an active-site residue. Topologically, residues Gly446 to Val451 are lumenal. A helical transmembrane segment spans residues Met452–Met467. Residues Asn468 to Gly473 lie on the Cytoplasmic side of the membrane. The helical transmembrane segment at Pro474–Cys505 threads the bilayer. Over Pro506–Pro525 the chain is Lumenal.

Belongs to the membrane-bound acyltransferase family. Sterol o-acyltransferase subfamily. May form homo- or heterodimers. Interacts with INSIG1; the interaction is direct and promotes association with AMFR/gp78. Polyubiquitinated by AMFR/gp78 at Cys-280, leading to its degradation when the lipid levels are low. Association with AMFR/gp78 is mediated via interaction with INSIG1. High concentration of cholesterol and fatty acid results in Cys-280 oxidation, preventing ubiquitination at the same site, resulting in protein stabilization. Post-translationally, oxidized at Cys-280: high concentration of cholesterol and fatty acid induce reactive oxygen species, which oxidizes Cys-280, preventing ubiquitination at the same site, and resulting in protein stabilization.

The protein localises to the endoplasmic reticulum membrane. The catalysed reaction is a sterol + a long-chain fatty acyl-CoA = a long-chain 3-hydroxysterol ester + CoA. The enzyme catalyses cholesterol + an acyl-CoA = a cholesterol ester + CoA. It carries out the reaction cholesterol + (9Z)-octadecenoyl-CoA = cholesteryl (9Z-octadecenoate) + CoA. It catalyses the reaction (5Z,8Z,11Z,14Z,17Z)-eicosapentaenoyl-CoA + cholesterol = (5Z,8Z,11Z,14Z,17Z-eicosapentaenoyl)-cholesterol + CoA. The catalysed reaction is (9Z,12Z,15Z)-octadecatrienoyl-CoA + cholesterol = (9Z,12Z,15Z-octadecatrienoyl)-cholesterol + CoA. The enzyme catalyses (5Z,8Z,11Z,14Z)-eicosatetraenoyl-CoA + cholesterol = cholesteryl (5Z,8Z,11Z,14Z)-eicosatetraenoate + CoA. Its function is as follows. Catalyzes the formation of fatty acid-cholesterol esters, which are less soluble in membranes than cholesterol. Plays a role in lipoprotein assembly and dietary cholesterol absorption. Utilizes oleoyl-CoA ((9Z)-octadecenoyl-CoA) and linolenoyl-CoA ((9Z,12Z,15Z)-octadecatrienoyl-CoA) as substrates. May provide cholesteryl esters for lipoprotein secretion from hepatocytes and intestinal mucosa. The chain is Sterol O-acyltransferase 2 from Mus musculus (Mouse).